The sequence spans 1531 residues: Probable outer membrane protein PmpD (1531 aa).

The signal sequence occupies residues 1–20; it reads MSSEKDIKSTCSKFSLSVVA. The 288-residue stretch at 1244 to 1531 folds into the Autotransporter domain; that stretch reads EFDYSTNVWG…EANTGLRLIF (288 aa).

It belongs to the PMP outer membrane protein family.

The protein localises to the secreted. It localises to the cell wall. The protein resides in the cell outer membrane. The chain is Probable outer membrane protein PmpD (pmpD) from Chlamydia trachomatis serovar D (strain ATCC VR-885 / DSM 19411 / UW-3/Cx).